Here is a 352-residue protein sequence, read N- to C-terminus: UDP-N-acetylglucosamine--N-acetylmuramyl-(pentapeptide) pyrophosphoryl-undecaprenol N-acetylglucosamine transferase (352 aa).

UDP-N-acetyl-alpha-D-glucosamine is bound by residues S195 and Q287.

This sequence belongs to the glycosyltransferase 28 family. MurG subfamily.

The protein localises to the cell membrane. It catalyses the reaction Mur2Ac(oyl-L-Ala-gamma-D-Glu-L-Lys-D-Ala-D-Ala)-di-trans,octa-cis-undecaprenyl diphosphate + UDP-N-acetyl-alpha-D-glucosamine = beta-D-GlcNAc-(1-&gt;4)-Mur2Ac(oyl-L-Ala-gamma-D-Glu-L-Lys-D-Ala-D-Ala)-di-trans,octa-cis-undecaprenyl diphosphate + UDP + H(+). It participates in cell wall biogenesis; peptidoglycan biosynthesis. Functionally, cell wall formation. Catalyzes the transfer of a GlcNAc subunit on undecaprenyl-pyrophosphoryl-MurNAc-pentapeptide (lipid intermediate I) to form undecaprenyl-pyrophosphoryl-MurNAc-(pentapeptide)GlcNAc (lipid intermediate II). In Streptococcus pneumoniae (strain ATCC BAA-255 / R6), this protein is UDP-N-acetylglucosamine--N-acetylmuramyl-(pentapeptide) pyrophosphoryl-undecaprenol N-acetylglucosamine transferase.